We begin with the raw amino-acid sequence, 353 residues long: Suppressor of RNA-mediated gene silencing (353 aa).

Belongs to the phytoreovirus non-structural protein 10 family.

In terms of biological role, suppressor of RNA-mediated gene silencing, also known as post-transcriptional gene silencing (PTGS), a mechanism of plant viral defense that limits the accumulation of viral RNAs. This Rice dwarf virus (isolate Fujian) (RDV) protein is Suppressor of RNA-mediated gene silencing.